The sequence spans 152 residues: AIG2-like protein D (152 aa).

A substrate-binding site is contributed by 13–18 (YGSLMA). Glu-81 functions as the Proton acceptor in the catalytic mechanism.

Belongs to the gamma-glutamylcyclotransferase family. Expressed mainly in leaves.

In terms of biological role, putative gamma-glutamylcyclotransferase. The sequence is that of AIG2-like protein D from Arabidopsis thaliana (Mouse-ear cress).